The primary structure comprises 285 residues: HTH-type transcriptional regulator MurR (285 aa).

The region spanning 1 to 77 (MLYLTKISNA…MALIGEYSAS (77 aa)) is the HTH rpiR-type domain. The H-T-H motif DNA-binding region spans 37-56 (SRQMAKQLGISQSSIVKFAQ). Residues 128–279 (IIEVISKAPF…SLKMIQRSSE (152 aa)) form the SIS domain.

As to quaternary structure, homotetramer.

It participates in amino-sugar metabolism; N-acetylmuramate degradation [regulation]. In terms of biological role, represses the expression of the murPQ operon involved in the uptake and degradation of N-acetylmuramic acid (MurNAc). Binds to two adjacent inverted repeats within the operator region. MurNAc 6-phosphate, the substrate of MurQ, is the specific inducer that weakens binding of MurR to the operator. The chain is HTH-type transcriptional regulator MurR from Shigella boydii serotype 18 (strain CDC 3083-94 / BS512).